We begin with the raw amino-acid sequence, 490 residues long: N-succinylglutamate 5-semialdehyde dehydrogenase (490 aa).

223-228 (GSAGTG) serves as a coordination point for NAD(+). Active-site residues include Glu-246 and Cys-280.

This sequence belongs to the aldehyde dehydrogenase family. AstD subfamily.

The enzyme catalyses N-succinyl-L-glutamate 5-semialdehyde + NAD(+) + H2O = N-succinyl-L-glutamate + NADH + 2 H(+). It functions in the pathway amino-acid degradation; L-arginine degradation via AST pathway; L-glutamate and succinate from L-arginine: step 4/5. Catalyzes the NAD-dependent reduction of succinylglutamate semialdehyde into succinylglutamate. This chain is N-succinylglutamate 5-semialdehyde dehydrogenase, found in Serratia proteamaculans (strain 568).